Consider the following 1545-residue polypeptide: Immunoglobulin A1 protease autotransporter (1545 aa).

An N-terminal signal peptide occupies residues 1–25; that stretch reads MLNKKFKLNFIALTVAYALTPYTEA. The 311-residue stretch at 26-336 folds into the Peptidase S6 domain; the sequence is ALVRDDVDYQ…NIYKPEFAEK (311 aa). The active site involves Ser292. Over residues 995-1019 the composition is skewed to polar residues; that stretch reads TVDTTNITTPNNIQADVPSVPSNNE. The interval 995-1246 is disordered; the sequence is TVDTTNITTP…NVEPATTSSN (252 aa). Positions 1036–1046 are enriched in low complexity; it reads TPSETTETVAE. A compositionally biased stretch (basic and acidic residues) spans 1048-1060; that stretch reads SKQESKTVEKNEQ. Polar residues predominate over residues 1080 to 1094; the sequence is VKANTQTNEVAQSGS. A compositionally biased stretch (basic and acidic residues) spans 1095–1125; sequence ETKETQTTETKETATVEKEEKAKVETEKTQE. Composition is skewed to polar residues over residues 1129 to 1145 and 1161 to 1222; these read VTSQ…TVQP and EPQS…SSNK. The Autotransporter domain maps to 1293–1545; it reads NNEGQYNVWV…TAELKLSFSF (253 aa).

The protein localises to the periplasm. The protein resides in the secreted. It localises to the cell surface. Its subcellular location is the cell outer membrane. It catalyses the reaction Cleavage of immunoglobulin A molecules at certain Pro-|-Xaa bonds in the hinge region. No small molecule substrates are known.. Functionally, virulence factor; cleaves host immunoglobulin A producing intact Fc and Fab fragments. The chain is Immunoglobulin A1 protease autotransporter (iga) from Haemophilus influenzae.